Consider the following 83-residue polypeptide: Large ribosomal subunit protein eL43 (83 aa).

The Zn(2+) site is built by Cys38, Cys41, Cys56, and Cys59. The C4-type zinc-finger motif lies at 38–59; the sequence is CPVCGRRAVKRISTGIWQCTKC.

The protein belongs to the eukaryotic ribosomal protein eL43 family. Putative zinc-binding subfamily. Part of the 50S ribosomal subunit. The cofactor is Zn(2+).

Functionally, binds to the 23S rRNA. This is Large ribosomal subunit protein eL43 from Pyrococcus horikoshii (strain ATCC 700860 / DSM 12428 / JCM 9974 / NBRC 100139 / OT-3).